We begin with the raw amino-acid sequence, 444 residues long: MHILVVSVNYRTAPVEFREKLTFQAAELERAMTTLQNQKSVLENVIVSTCNRTEIYAVVDQLHTGRYYIKKFLADWFQLEIEEVAPYLTIFEQDGAIDHLFRVTCGLDSMVVGETQILGQIKDSFLEAQQVKATGTIFNELFKQVITLAKRAHSETTIGESAMSVSYAAVELGKKIFGELTDCHVLILGAGKMGELALQNLYGSGARKVTVMNRTLSKAEVMAEKYMGHAKPLSELQCALLEADILISSTGASDYVITKEMMTKVEKMRSGRPLFMVDIAVPRDIDPAIDELEGSFLYDIDDLQGVVEANRAERLKEAEKIQFMIEEEIVLFKTWLSTLGVVPLISALRDKALAIQSETMESLERKIPNLSDRERKVISKHTKSIINQLLKDPILVAKEIAAEEGADEKLALFAKIFDLEMEDVESRAEEVEHKRAWTPSVPSL.

Substrate contacts are provided by residues 49-52 (TCNR), serine 109, 114-116 (ETQ), and glutamine 120. Cysteine 50 (nucleophile) is an active-site residue. 189 to 194 (GAGKMG) is an NADP(+) binding site.

This sequence belongs to the glutamyl-tRNA reductase family. In terms of assembly, homodimer.

It carries out the reaction (S)-4-amino-5-oxopentanoate + tRNA(Glu) + NADP(+) = L-glutamyl-tRNA(Glu) + NADPH + H(+). The protein operates within porphyrin-containing compound metabolism; protoporphyrin-IX biosynthesis; 5-aminolevulinate from L-glutamyl-tRNA(Glu): step 1/2. Its function is as follows. Catalyzes the NADPH-dependent reduction of glutamyl-tRNA(Glu) to glutamate 1-semialdehyde (GSA). This chain is Glutamyl-tRNA reductase, found in Bacillus cereus (strain 03BB102).